Consider the following 446-residue polypeptide: Coiled-coil domain-containing protein 112 (446 aa).

Coiled-coil stretches lie at residues 23–116 and 219–400; these read LEEL…RKID and ERKK…NVSR. Disordered regions lie at residues 247 to 277 and 394 to 430; these read NNTP…AVEA and VENN…LLHI. Over residues 255 to 268 the composition is skewed to basic and acidic residues; that stretch reads NKPEDNQKQKEEQR.

It is found in the cytoplasm. Its subcellular location is the cytoskeleton. The protein resides in the microtubule organizing center. The protein localises to the centrosome. It localises to the centriolar satellite. In Macaca fascicularis (Crab-eating macaque), this protein is Coiled-coil domain-containing protein 112 (CCDC112).